Consider the following 363-residue polypeptide: Dual-specificity RNA methyltransferase RlmN (363 aa).

The active-site Proton acceptor is the Glu102. Positions 108–349 constitute a Radical SAM core domain; it reads EKKRATLCVS…KNRGQDIGAA (242 aa). An intrachain disulfide couples Cys115 to Cys350. [4Fe-4S] cluster is bound by residues Cys122, Cys126, and Cys129. S-adenosyl-L-methionine-binding positions include 174–175, Ser206, 228–230, and Asn307; these read GE and SLH. Cys350 serves as the catalytic S-methylcysteine intermediate.

The protein belongs to the radical SAM superfamily. RlmN family. The cofactor is [4Fe-4S] cluster.

It is found in the cytoplasm. It carries out the reaction adenosine(2503) in 23S rRNA + 2 reduced [2Fe-2S]-[ferredoxin] + 2 S-adenosyl-L-methionine = 2-methyladenosine(2503) in 23S rRNA + 5'-deoxyadenosine + L-methionine + 2 oxidized [2Fe-2S]-[ferredoxin] + S-adenosyl-L-homocysteine. It catalyses the reaction adenosine(37) in tRNA + 2 reduced [2Fe-2S]-[ferredoxin] + 2 S-adenosyl-L-methionine = 2-methyladenosine(37) in tRNA + 5'-deoxyadenosine + L-methionine + 2 oxidized [2Fe-2S]-[ferredoxin] + S-adenosyl-L-homocysteine. Its function is as follows. Specifically methylates position 2 of adenine 2503 in 23S rRNA and position 2 of adenine 37 in tRNAs. m2A2503 modification seems to play a crucial role in the proofreading step occurring at the peptidyl transferase center and thus would serve to optimize ribosomal fidelity. The chain is Dual-specificity RNA methyltransferase RlmN from Buchnera aphidicola subsp. Schizaphis graminum (strain Sg).